The sequence spans 195 residues: dITP/XTP pyrophosphatase (195 aa).

Ser-8 to Lys-13 is a binding site for substrate. The Mg(2+) site is built by Glu-39 and Asp-68. Asp-68 acts as the Proton acceptor in catalysis. Substrate-binding positions include Ser-69, Phe-149 to Asp-152, Lys-172, and His-177 to Arg-178.

Belongs to the HAM1 NTPase family. As to quaternary structure, homodimer. Mg(2+) serves as cofactor.

The catalysed reaction is XTP + H2O = XMP + diphosphate + H(+). It catalyses the reaction dITP + H2O = dIMP + diphosphate + H(+). The enzyme catalyses ITP + H2O = IMP + diphosphate + H(+). Its function is as follows. Pyrophosphatase that catalyzes the hydrolysis of nucleoside triphosphates to their monophosphate derivatives, with a high preference for the non-canonical purine nucleotides XTP (xanthosine triphosphate), dITP (deoxyinosine triphosphate) and ITP. Seems to function as a house-cleaning enzyme that removes non-canonical purine nucleotides from the nucleotide pool, thus preventing their incorporation into DNA/RNA and avoiding chromosomal lesions. This chain is dITP/XTP pyrophosphatase, found in Staphylococcus aureus (strain Mu50 / ATCC 700699).